Reading from the N-terminus, the 341-residue chain is B3 domain-containing transcription factor VRN1 (341 aa).

A DNA-binding region (TF-B3 1) is located at residues 5–98 (FFHKLIFSST…AFSVYIFNLS (94 aa)). The segment at 166–223 (GPVKAEEPTPTPKIPKKRGRKKKNADPEEINSSAPRDDDPENRSKFYESASARKRTVT) is disordered. Positions 179-188 (IPKKRGRKKK) are enriched in basic residues. The span at 200 to 211 (PRDDDPENRSKF) shows a compositional bias: basic and acidic residues. The TF-B3 2 DNA-binding region spans 244 to 338 (FRVVLRPSYL…VLKVTAFRVN (95 aa)).

Expressed in roots and at lower levels in aerial parts.

The protein resides in the nucleus. Its function is as follows. Essential protein. Involved in the regulation of vernalization. Acts as a transcriptional repressor of FLC, a major target of the vernalization pathway. Binds DNA in vitro in a non-sequence-specific manner. The polypeptide is B3 domain-containing transcription factor VRN1 (Arabidopsis thaliana (Mouse-ear cress)).